Reading from the N-terminus, the 227-residue chain is Prolactin-4A1 (227 aa).

The signal sequence occupies residues 1–31; that stretch reads MHLSLTPQWSSWTVLLLLVSNLLLWENTASA. Cystine bridges form between C87–C203 and C220–C227. Residue N175 is glycosylated (N-linked (GlcNAc...) asparagine).

The protein belongs to the somatotropin/prolactin family. Expressed specifically in placenta. Expressed in both trophoblast giant cells and spongiotrophoblast cells.

The protein resides in the secreted. The chain is Prolactin-4A1 (Prl4a1) from Mus musculus (Mouse).